A 602-amino-acid polypeptide reads, in one-letter code: 3-hydroxy-3-methylglutaryl-coenzyme A reductase 2 (602 aa).

2 helical membrane-spanning segments follow: residues Ala44 to Val67 and Ala95 to Val115. Positions Gln116–Glu187 are linker. N-linked (GlcNAc...) asparagine glycosylation is present at Asn124. The catalytic stretch occupies residues Asp188–Ser602. Glu281 serves as the catalytic Charge relay system. N-linked (GlcNAc...) asparagine glycosylation is present at Asn345. The active-site Charge relay system is the Lys413. An N-linked (GlcNAc...) asparagine glycan is attached at Asn458. The Charge relay system role is filled by Asp489. His587 functions as the Proton donor in the catalytic mechanism. Residue Asn591 is glycosylated (N-linked (GlcNAc...) asparagine).

Belongs to the HMG-CoA reductase family.

Its subcellular location is the endoplasmic reticulum membrane. The catalysed reaction is (R)-mevalonate + 2 NADP(+) + CoA = (3S)-3-hydroxy-3-methylglutaryl-CoA + 2 NADPH + 2 H(+). It participates in metabolic intermediate biosynthesis; (R)-mevalonate biosynthesis; (R)-mevalonate from acetyl-CoA: step 3/3. In terms of biological role, catalyzes the synthesis of mevalonate. The specific precursor of all isoprenoid compounds present in plants. This Solanum lycopersicum (Tomato) protein is 3-hydroxy-3-methylglutaryl-coenzyme A reductase 2 (HMG2).